The chain runs to 136 residues: Transcription antitermination protein NusB (136 aa).

This sequence belongs to the NusB family.

In terms of biological role, involved in transcription antitermination. Required for transcription of ribosomal RNA (rRNA) genes. Binds specifically to the boxA antiterminator sequence of the ribosomal RNA (rrn) operons. The protein is Transcription antitermination protein NusB of Salinispora tropica (strain ATCC BAA-916 / DSM 44818 / JCM 13857 / NBRC 105044 / CNB-440).